Here is a 425-residue protein sequence, read N- to C-terminus: Melibiose permease (425 aa).

Residues M1–N13 lie on the Cytoplasmic side of the membrane. A helical transmembrane segment spans residues F14–F34. At L35–T50 the chain is on the periplasmic side. Residues G51 to I71 traverse the membrane as a helical segment. The Cytoplasmic portion of the chain corresponds to S72–H80. The chain crosses the membrane as a helical span at residues L81 to A101. Residues P102–N107 lie on the Periplasmic side of the membrane. A helical membrane pass occupies residues I108–G128. Residues A129–R149 are Cytoplasmic-facing. The helical transmembrane segment at M150–D170 threads the bilayer. Residue P171 is a topological domain, periplasmic. The helical transmembrane segment at S172–A192 threads the bilayer. The Cytoplasmic portion of the chain corresponds to K193–M227. The helical transmembrane segment at W228–F248 threads the bilayer. Residues A249–G267 are Periplasmic-facing. The helical transmembrane segment at F268–I288 threads the bilayer. Topologically, residues N289–L297 are cytoplasmic. A helical membrane pass occupies residues L298–V318. Over E319–M325 the chain is Periplasmic. A helical membrane pass occupies residues L326 to F346. At D347–T353 the chain is on the cytoplasmic side. A helical membrane pass occupies residues I354 to A374. Topologically, residues G375–E385 are periplasmic. The helical transmembrane segment at T386 to S406 threads the bilayer. Residues S407 to R425 are Cytoplasmic-facing.

It belongs to the major facilitator superfamily. Oligosaccharide:H(+) symporter (OHS) (TC 2.A.1.5) family.

The protein resides in the cell inner membrane. Functionally, responsible for transport of melibiose into the cell, with the concomitant import of a proton (symport system). Can also transport lactose, and has weak activity with maltose. Cannot transport the analog methyl-1-thio-beta,D-galactopyranoside (TMG). The chain is Melibiose permease from Enterobacter cloacae subsp. cloacae (strain ATCC 13047 / DSM 30054 / NBRC 13535 / NCTC 10005 / WDCM 00083 / NCDC 279-56).